Here is an 82-residue protein sequence, read N- to C-terminus: Acyl carrier protein (82 aa).

The Carrier domain maps to 3 to 77; that stretch reads SSIFDKVQNI…QAIEFIQHAI (75 aa). Serine 37 carries the post-translational modification O-(pantetheine 4'-phosphoryl)serine.

This sequence belongs to the acyl carrier protein (ACP) family. Post-translationally, 4'-phosphopantetheine is transferred from CoA to a specific serine of apo-ACP by AcpS. This modification is essential for activity because fatty acids are bound in thioester linkage to the sulfhydryl of the prosthetic group.

It localises to the plastid. The protein resides in the chloroplast. It functions in the pathway lipid metabolism; fatty acid biosynthesis. Functionally, carrier of the growing fatty acid chain in fatty acid biosynthesis. In Gracilaria tenuistipitata var. liui (Red alga), this protein is Acyl carrier protein.